A 125-amino-acid polypeptide reads, in one-letter code: Ixonnexin (125 aa).

Residues 1-21 (MGLTGTTLVLVCVAFFGSAAA) form the signal peptide. A glycan (N-linked (GlcNAc...) asparagine) is linked at N26. The segment at 81 to 125 (TSSGGPDDTGDNTPPPTEKPKQKKKKPKKTKKPKRKSKKDQKENF) is disordered. Over residues 101 to 119 (KQKKKKPKKTKKPKRKSKK) the composition is skewed to basic residues.

The protein belongs to the salp14 family. As to quaternary structure, homodimer. Interacts with host PLG. Interacts with host PLAT. As to expression, saliva (at protein level).

The protein localises to the secreted. Functionally, salivary protein that promotes host fibrinolysis via accelerating host plasmin generation from plasminogen (PLG) initiated by tPA/tissue-type plasminogen activator (PLAT). Does not affect urokinase (PLAU)-mediated fibrinolysis in the host. Enhances amidolytic activity of host coagulation factor Xa (F10). This is Ixonnexin from Ixodes scapularis (Black-legged tick).